The following is a 357-amino-acid chain: Peptide chain release factor 1 (357 aa).

At Q235 the chain carries N5-methylglutamine. Residues R282–R294 show a composition bias toward basic and acidic residues. The tract at residues R282–T308 is disordered.

This sequence belongs to the prokaryotic/mitochondrial release factor family. Methylated by PrmC. Methylation increases the termination efficiency of RF1.

Its subcellular location is the cytoplasm. Its function is as follows. Peptide chain release factor 1 directs the termination of translation in response to the peptide chain termination codons UAG and UAA. This chain is Peptide chain release factor 1, found in Brucella anthropi (strain ATCC 49188 / DSM 6882 / CCUG 24695 / JCM 21032 / LMG 3331 / NBRC 15819 / NCTC 12168 / Alc 37) (Ochrobactrum anthropi).